We begin with the raw amino-acid sequence, 67 residues long: Neurotoxin Cex10 (67 aa).

An LCN-type CS-alpha/beta domain is found at 1–65 (KDGYLVEVTG…TWPLPNKSCG (65 aa)). Disulfide bonds link cysteine 11-cysteine 64, cysteine 15-cysteine 40, cysteine 24-cysteine 45, and cysteine 28-cysteine 47. Cysteine 64 carries the post-translational modification Cysteine amide. Residues 65–67 (GKK) constitute a propeptide that is removed on maturation.

It belongs to the long (4 C-C) scorpion toxin superfamily. Sodium channel inhibitor family. Beta subfamily. In terms of tissue distribution, expressed by the venom gland.

Its subcellular location is the secreted. Beta toxins bind voltage-independently at site-4 of sodium channels (Nav) and shift the voltage of activation toward more negative potentials thereby affecting sodium channel activation and promoting spontaneous and repetitive firing. This chain is Neurotoxin Cex10, found in Centruroides exilicauda (Bark scorpion).